A 167-amino-acid chain; its full sequence is Elafin (167 aa).

Residues 1 to 21 (MRSRSFLVLVVVFLICGTLVA) form the signal peptide. Residues 22 to 70 (QAAGRIRRPKGKGTKKILALVKGQGPVRGKDQVKGQGPVKGQDLGKSQD) constitute a propeptide that is removed on maturation. 12 tandem repeats follow at residues 44–49 (GQGPVR), 50–55 (GKDQVK), 56–61 (GQGPVK), 62–67 (GQDLGK), 68–73 (SQDPVK), 74–79 (AQLPDK), 80–85 (GQDLGK), 86–91 (GEDSVK), 92–97 (GQDPFK), 98–103 (AQLPDK), 104–109 (LQDPVK), and 110–115 (AQPAIK). A 12 X 6 AA tandem repeats of [GSAL]-[QEK]-[DGLP]-[APSLQ]-[VGDFI]-[KR] region spans residues 44 to 115 (GQGPVRGKDQ…DPVKAQPAIK (72 aa)). Positions 46 to 104 (GPVRGKDQVKGQGPVKGQDLGKSQDPVKAQLPDKGQDLGKGEDSVKGQDPFKAQLPDKL) are disordered. The tract at residues 78–126 (DKGQDLGKGEDSVKGQDPFKAQLPDKLQDPVKAQPAIKRLILLTKPGSC) is 2 X tandem repeats of SVP-1 like motif. The segment covering 79–91 (KGQDLGKGEDSVK) has biased composition (basic and acidic residues). 2 SVP-1 clotting repeats span residues 80 to 101 (GQDL…AQLP) and 104 to 126 (LQDP…PGSC). The WAP domain maps to 119–167 (LLTKPGSCPRILIRCLMVNPPNRCLSDAQCPGLKKCCEGFCGKACMDPK). 4 disulfides stabilise this stretch: Cys126/Cys155, Cys133/Cys159, Cys142/Cys154, and Cys148/Cys163.

In terms of tissue distribution, trachea and large intestine.

Functionally, neutrophil and pancreatic elastase-specific inhibitor of skin. It may prevent elastase-mediated tissue proteolysis. In Sus scrofa (Pig), this protein is Elafin.